A 72-amino-acid polypeptide reads, in one-letter code: Conotoxin Lt6.3 (72 aa).

A signal peptide spans 1-22 (MKLTSVVIVAVLFLAACQLTTS). The propeptide occupies 23–46 (DGSRGTWKDRAVRSITKVSMLRWP). Intrachain disulfides connect Cys-47–Cys-61, Cys-54–Cys-64, and Cys-60–Cys-71.

The protein belongs to the conotoxin O1 superfamily. In terms of tissue distribution, expressed by the venom duct.

The protein resides in the secreted. The chain is Conotoxin Lt6.3 from Conus litteratus (Lettered cone).